The chain runs to 558 residues: Chaperonin GroEL 1 (558 aa).

Residues 29–32 (TLGP), 86–90 (DGTTT), G413, and D494 contribute to the ATP site.

The protein belongs to the chaperonin (HSP60) family. In terms of assembly, forms a cylinder of 14 subunits composed of two heptameric rings stacked back-to-back. Interacts with the co-chaperonin GroES.

Its subcellular location is the cytoplasm. It carries out the reaction ATP + H2O + a folded polypeptide = ADP + phosphate + an unfolded polypeptide.. In terms of biological role, together with its co-chaperonin GroES, plays an essential role in assisting protein folding. The GroEL-GroES system forms a nano-cage that allows encapsulation of the non-native substrate proteins and provides a physical environment optimized to promote and accelerate protein folding. The polypeptide is Chaperonin GroEL 1 (Acaryochloris marina (strain MBIC 11017)).